The primary structure comprises 457 residues: DNA repair protein RadA (457 aa).

A C4-type zinc finger spans residues 10–27; it reads CQECGYESAKWMGKCPGC. Position 97-104 (97-104) interacts with ATP; that stretch reads GDPGIGKS. The RadA KNRFG motif motif lies at 254-258; the sequence is KNRFG. The lon-protease-like stretch occupies residues 353–457; that stretch reads DAYVNVAGGV…QDALEVTLGR (105 aa).

The protein belongs to the RecA family. RadA subfamily.

DNA-dependent ATPase involved in processing of recombination intermediates, plays a role in repairing DNA breaks. Stimulates the branch migration of RecA-mediated strand transfer reactions, allowing the 3' invading strand to extend heteroduplex DNA faster. Binds ssDNA in the presence of ADP but not other nucleotides, has ATPase activity that is stimulated by ssDNA and various branched DNA structures, but inhibited by SSB. Does not have RecA's homology-searching function. The polypeptide is DNA repair protein RadA (Halalkalibacterium halodurans (strain ATCC BAA-125 / DSM 18197 / FERM 7344 / JCM 9153 / C-125) (Bacillus halodurans)).